Consider the following 122-residue polypeptide: Large ribosomal subunit protein uL14 (122 aa).

This sequence belongs to the universal ribosomal protein uL14 family. As to quaternary structure, part of the 50S ribosomal subunit. Forms a cluster with proteins L3 and L19. In the 70S ribosome, L14 and L19 interact and together make contacts with the 16S rRNA in bridges B5 and B8.

In terms of biological role, binds to 23S rRNA. Forms part of two intersubunit bridges in the 70S ribosome. The protein is Large ribosomal subunit protein uL14 of Cereibacter sphaeroides (strain ATCC 17029 / ATH 2.4.9) (Rhodobacter sphaeroides).